The primary structure comprises 119 residues: MKQVAFVFTQAPHGTSAGREGLDALLAMSALTEEIGVFFLSDGVFQILPGQHPQAVLSRDYISTFKVLPLYDIERCYICRESLQERGLSEEHAFVIDVEALDAAALRERLDDYDVVLTF.

The protein belongs to the DsrF/TusC family. In terms of assembly, heterohexamer, formed by a dimer of trimers. The hexameric TusBCD complex contains 2 copies each of TusB, TusC and TusD. The TusBCD complex interacts with TusE.

The protein resides in the cytoplasm. Part of a sulfur-relay system required for 2-thiolation of 5-methylaminomethyl-2-thiouridine (mnm(5)s(2)U) at tRNA wobble positions. This chain is Protein TusC, found in Cronobacter sakazakii (strain ATCC BAA-894) (Enterobacter sakazakii).